The following is a 641-amino-acid chain: Sodium-dependent nutrient amino acid transporter 1 (641 aa).

A disordered region spans residues 1 to 34; sequence MELKGVQPSNGSANGNGTTNAASTEKADTEKQTA. Residues 1 to 38 lie on the Cytoplasmic side of the membrane; that stretch reads MELKGVQPSNGSANGNGTTNAASTEKADTEKQTAERTN. A compositionally biased stretch (low complexity) spans 9-24; that stretch reads SNGSANGNGTTNAAST. The span at 25-34 shows a compositional bias: basic and acidic residues; it reads EKADTEKQTA. 3 consecutive transmembrane segments (helical) span residues 39–59, 72–92, and 109–129; these read WGNG…LGNV, GAFL…MYYL, and SVVP…ICII. N-linked (GlcNAc...) asparagine glycosylation is found at Asn-183 and Asn-188. 9 helical membrane passes run 229-249, 258-278, 307-327, 341-361, 401-421, 441-461, 474-494, 516-536, and 552-572; these read PDWK…LVIM, AAYF…IRAV, AVVQ…MFAS, IVTT…FAIL, LFSV…IVAL, VALI…TPGG, TYVV…VYGL, CWSF…MATI, and IAGW…GLWY.

It belongs to the sodium:neurotransmitter symporter (SNF) (TC 2.A.22) family.

It localises to the membrane. Its function is as follows. Unusual broad substrate spectrum amino acid:sodium cotransporter that promotes absorption of the D isomers of essential amino acids. Neutral amino acids are the preferred substrates, especially methionine and phenylalanine. The polypeptide is Sodium-dependent nutrient amino acid transporter 1 (Drosophila yakuba (Fruit fly)).